Consider the following 143-residue polypeptide: Nucleoside diphosphate kinase (143 aa).

6 residues coordinate ATP: Lys-11, Phe-59, Arg-87, Thr-93, Arg-104, and Asn-114. His-117 functions as the Pros-phosphohistidine intermediate in the catalytic mechanism.

The protein belongs to the NDK family. As to quaternary structure, homotetramer. The cofactor is Mg(2+).

The protein resides in the cytoplasm. It catalyses the reaction a 2'-deoxyribonucleoside 5'-diphosphate + ATP = a 2'-deoxyribonucleoside 5'-triphosphate + ADP. The catalysed reaction is a ribonucleoside 5'-diphosphate + ATP = a ribonucleoside 5'-triphosphate + ADP. Its function is as follows. Major role in the synthesis of nucleoside triphosphates other than ATP. The ATP gamma phosphate is transferred to the NDP beta phosphate via a ping-pong mechanism, using a phosphorylated active-site intermediate. This chain is Nucleoside diphosphate kinase, found in Erwinia tasmaniensis (strain DSM 17950 / CFBP 7177 / CIP 109463 / NCPPB 4357 / Et1/99).